Here is a 265-residue protein sequence, read N- to C-terminus: Energy-coupling factor transporter transmembrane protein EcfT (265 aa).

Transmembrane regions (helical) follow at residues 29–49 (IILF…AILI), 73–93 (VWIL…GGTV), 110–130 (AIFI…LTLT), 143–163 (LLGP…MMSI), and 242–262 (FTWR…VIGW).

Belongs to the energy-coupling factor EcfT family. As to quaternary structure, forms a stable energy-coupling factor (ECF) transporter complex composed of 2 membrane-embedded substrate-binding proteins (S component), 2 ATP-binding proteins (A component) and 2 transmembrane proteins (T component). May be able to interact with more than 1 S component at a time.

Its subcellular location is the cell membrane. Functionally, transmembrane (T) component of an energy-coupling factor (ECF) ABC-transporter complex. Unlike classic ABC transporters this ECF transporter provides the energy necessary to transport a number of different substrates. This Brevibacillus brevis (strain 47 / JCM 6285 / NBRC 100599) protein is Energy-coupling factor transporter transmembrane protein EcfT.